We begin with the raw amino-acid sequence, 341 residues long: NADH-quinone oxidoreductase subunit H (341 aa).

9 helical membrane-spanning segments follow: residues 4–24 (LVNI…LTYF), 38–58 (PSVV…KLLI), 70–90 (ILFI…WAVI), 115–135 (VGVL…IIAG), 161–181 (IGLI…GEMV), 187–207 (MPFW…ISLL), 239–259 (LFFL…TIFF), 275–295 (IPGL…FIWI), and 314–334 (VFLP…LFTG).

It belongs to the complex I subunit 1 family. In terms of assembly, NDH-1 is composed of 14 different subunits. Subunits NuoA, H, J, K, L, M, N constitute the membrane sector of the complex.

It localises to the cell membrane. It catalyses the reaction a quinone + NADH + 5 H(+)(in) = a quinol + NAD(+) + 4 H(+)(out). NDH-1 shuttles electrons from NADH, via FMN and iron-sulfur (Fe-S) centers, to quinones in the respiratory chain. The immediate electron acceptor for the enzyme in this species is believed to be ubiquinone. Couples the redox reaction to proton translocation (for every two electrons transferred, four hydrogen ions are translocated across the cytoplasmic membrane), and thus conserves the redox energy in a proton gradient. This subunit may bind ubiquinone. In Wolbachia pipientis wMel, this protein is NADH-quinone oxidoreductase subunit H.